Reading from the N-terminus, the 406-residue chain is Arginine deiminase (406 aa).

The active-site Amidino-cysteine intermediate is the C396.

Belongs to the arginine deiminase family.

It is found in the cytoplasm. It catalyses the reaction L-arginine + H2O = L-citrulline + NH4(+). The protein operates within amino-acid degradation; L-arginine degradation via ADI pathway; carbamoyl phosphate from L-arginine: step 1/2. The protein is Arginine deiminase of Aliivibrio fischeri (strain ATCC 700601 / ES114) (Vibrio fischeri).